The primary structure comprises 246 residues: UDP-N-acetyl-D-mannosaminuronic acid transferase (246 aa).

It belongs to the glycosyltransferase 26 family.

The catalysed reaction is UDP-N-acetyl-alpha-D-mannosaminouronate + N-acetyl-alpha-D-glucosaminyl-di-trans,octa-cis-undecaprenyl diphosphate = beta-D-ManNAcA-(1-&gt;4)-alpha-D-GlcNAc-di-trans,octa-cis-undecaprenyl diphosphate + UDP + H(+). It participates in bacterial outer membrane biogenesis; enterobacterial common antigen biosynthesis. Its function is as follows. Catalyzes the synthesis of Und-PP-GlcNAc-ManNAcA (Lipid II), the second lipid-linked intermediate involved in enterobacterial common antigen (ECA) synthesis. The protein is UDP-N-acetyl-D-mannosaminuronic acid transferase of Escherichia coli O157:H7.